The sequence spans 335 residues: Succinylglutamate desuccinylase (335 aa).

Zn(2+) is bound by residues H59, E62, and H151. E215 is a catalytic residue.

This sequence belongs to the AspA/AstE family. Succinylglutamate desuccinylase subfamily. Zn(2+) is required as a cofactor.

The catalysed reaction is N-succinyl-L-glutamate + H2O = L-glutamate + succinate. Its pathway is amino-acid degradation; L-arginine degradation via AST pathway; L-glutamate and succinate from L-arginine: step 5/5. In terms of biological role, transforms N(2)-succinylglutamate into succinate and glutamate. This is Succinylglutamate desuccinylase from Pseudomonas syringae pv. tomato (strain ATCC BAA-871 / DC3000).